The sequence spans 244 residues: MKIDLNADLGEGCASDAELLTLVSSANIACGFHAGDAQTMQACVREAIKNGVAIGAHPSFPDRENFGRSAMQLPPETVYAQTLYQIGALATIARAQGGVMRHVKPHGMLYNQAAKEAQLADAIARAVYACDPALVLVGLAGSELIRAGKQYGLTTREEVFADRGYQADGSLVPRSQPGALIENEEQALAQTLEMVQHGRVKSITGEWATVAAQTVCLHGDGEHALAFARRLRATFAKKGIVVAA.

Belongs to the LamB/PxpA family. In terms of assembly, forms a complex composed of PxpA, PxpB and PxpC.

It carries out the reaction 5-oxo-L-proline + ATP + 2 H2O = L-glutamate + ADP + phosphate + H(+). Functionally, catalyzes the cleavage of 5-oxoproline to form L-glutamate coupled to the hydrolysis of ATP to ADP and inorganic phosphate. The protein is 5-oxoprolinase subunit A of Shigella flexneri.